The sequence spans 492 residues: Cysteine--tRNA ligase (492 aa).

Cysteine 31 lines the Zn(2+) pocket. Residues proline 33–histidine 43 carry the 'HIGH' region motif. Residues cysteine 226, histidine 251, and glutamate 255 each contribute to the Zn(2+) site. The 'KMSKS' region signature appears at lysine 283–serine 287. Lysine 286 provides a ligand contact to ATP.

This sequence belongs to the class-I aminoacyl-tRNA synthetase family. In terms of assembly, monomer. Requires Zn(2+) as cofactor.

It is found in the cytoplasm. The enzyme catalyses tRNA(Cys) + L-cysteine + ATP = L-cysteinyl-tRNA(Cys) + AMP + diphosphate. The sequence is that of Cysteine--tRNA ligase from Azobacteroides pseudotrichonymphae genomovar. CFP2.